A 134-amino-acid chain; its full sequence is L-ectoine synthase (134 aa).

This sequence belongs to the ectoine synthase family.

It catalyses the reaction (2S)-4-acetamido-2-aminobutanoate = L-ectoine + H2O. It functions in the pathway amine and polyamine biosynthesis; ectoine biosynthesis; L-ectoine from L-aspartate 4-semialdehyde: step 3/3. Functionally, catalyzes the circularization of gamma-N-acetyl-alpha,gamma-diaminobutyric acid (ADABA) to ectoine (1,4,5,6-tetrahydro-2-methyl-4-pyrimidine carboxylic acid), which is an excellent osmoprotectant. The protein is L-ectoine synthase of Thermobifida fusca (strain YX).